The sequence spans 655 residues: Probable alpha-galactosidase D (655 aa).

The signal sequence occupies residues 1–16 (MLPKIFYLSLLPAALG). N-linked (GlcNAc...) asparagine glycans are attached at residues N47 and N91. The cysteines at positions 124 and 155 are disulfide-linked. Catalysis depends on D153, which acts as the Nucleophile. Residues N180 and N189 are each glycosylated (N-linked (GlcNAc...) asparagine). 198-202 (EWGID) lines the substrate pocket. D220 (proton donor) is an active-site residue. N349, N436, N458, N503, N537, N541, and N580 each carry an N-linked (GlcNAc...) asparagine glycan.

Belongs to the glycosyl hydrolase 27 family.

Its subcellular location is the secreted. It carries out the reaction Hydrolysis of terminal, non-reducing alpha-D-galactose residues in alpha-D-galactosides, including galactose oligosaccharides, galactomannans and galactolipids.. In terms of biological role, hydrolyzes a variety of simple alpha-D-galactoside as well as more complex molecules such as oligosaccharides and polysaccharides. The polypeptide is Probable alpha-galactosidase D (aglD) (Aspergillus flavus (strain ATCC 200026 / FGSC A1120 / IAM 13836 / NRRL 3357 / JCM 12722 / SRRC 167)).